Here is a 162-residue protein sequence, read N- to C-terminus: Caveolin-2 (162 aa).

The Cytoplasmic portion of the chain corresponds to 1–86 (MGLETEKADV…FEISKYVIYK (86 aa)). Y19 carries the phosphotyrosine; by SRC modification. Residues S20 and S23 each carry the phosphoserine modification. Y27 is subject to Phosphotyrosine; by SRC. S36 carries the post-translational modification Phosphoserine. An intramembrane region (helical) is located at residues 87-107 (FLTVFLAIPLAFAAGIIFATL). Topologically, residues 108–162 (SCLHIWIIMPFVKTCLMVLPSVQTIWRSVTDAVIAPLCTSVGRVFSSVSLQLSRD) are cytoplasmic.

This sequence belongs to the caveolin family. In terms of assembly, monomer or homodimer. Interacts with CAV1; the interaction forms a stable heterooligomeric complex that is required for targeting to lipid rafts and for caveolae formation. Tyrosine phosphorylated forms do not form heterooligomers with the Tyr-19-phosphorylated form existing as a monomer or dimer, and the Tyr-27-form as a monomer only. Interacts (tyrosine phosphorylated form) with the SH2 domain-containing proteins, RASA1, NCK1 and SRC. Interacts (tyrosine phosphorylated form) with INSR, the interaction (Tyr-27-phosphorylated form) is increased on insulin stimulation. Interacts (Tyr-19 phosphorylated form) with MAPK1 (phosphorylated form); the interaction, promoted by insulin, leads to nuclear location and MAPK1 activation. Interacts with STAT3; the interaction is increased on insulin-induced tyrosine phosphorylation leading to STAT activation. Phosphorylated on serine and tyrosine residues. CAV1 promotes phosphorylation on Ser-23 which then targets the complex to the plasma membrane, lipid rafts and caveolae. Phosphorylation on Ser-36 appears to modulate mitosis in endothelial cells. Phosphorylation on both Tyr-19 and Tyr-27 is required for insulin-induced 'Ser-727' phosphorylation of STAT3 and its activation. Phosphorylation on Tyr-19 is required for insulin-induced phosphorylation of MAPK1 and DNA binding of STAT3. Tyrosine phosphorylation is induced by both EGF and insulin (By. similarity).

It is found in the nucleus. The protein localises to the cytoplasm. It localises to the golgi apparatus membrane. Its subcellular location is the cell membrane. The protein resides in the membrane. It is found in the caveola. In terms of biological role, may act as a scaffolding protein within caveolar membranes. Interacts directly with G-protein alpha subunits and can functionally regulate their activity. Acts as an accessory protein in conjunction with CAV1 in targeting to lipid rafts and driving caveolae formation. The Ser-36 phosphorylated form has a role in modulating mitosis in endothelial cells. Positive regulator of cellular mitogenesis of the MAPK signaling pathway. Required for the insulin-stimulated nuclear translocation and activation of MAPK1 and STAT3, and the subsequent regulation of cell cycle progression. In Carollia perspicillata (Seba's short-tailed bat), this protein is Caveolin-2 (CAV2).